The chain runs to 391 residues: MASGNPYTLKWGIMATGGIAETFCKDLLCNPAIRGADDVRHEIVAVASSSSSKRAEEFLQRIDGAFDAKTYGSYPELVADPNVDIVYVATPHSHHFQNTMLALEAGKNVLCEKAFTVTAAQARKLVETAKAKKLFLMEAVWTRYFPLSIKIRELIAAGEIGTVFRTIADLSINANSEQGQALKFADSHRMVNPDLAGGATLDLGVYPLTWVFQTLYHLQPEEDKEAPTVVASSNKYTTGADENTAIICSFPRHNSIGIASTTMRADTDPEKDTIPAVRIQGSKGEIQVFFPTYRPLKYKVVKTNGEAQTVDCPIPGDPARKGSGHGMFWEADECARCLRDGKLESATLPWKESIVIMETMEEALRQGGVTYPELITTDVYDPKSPLNTGNQ.

It belongs to the Gfo/Idh/MocA family.

The catalysed reaction is D-xylose + NADP(+) = D-xylono-1,5-lactone + NADPH + H(+). NADP-dependent D-xylose dehydrogenase catalyzing the oxydation of D-xylose into D-xylonolactone. Also displays some, albeit lower activity with D-glucose, D-galactose and L-arabinose as substrate. Probably not involved in D-xylose degradation, as it has been shown that H.jecorina assimilates D-xylose via D-xylose reductase and xylitol dehydrogenase, and it is unable to grow on D-xylonic acid as sole carbon source. May play a role in the regeneration of NADP(+) in the presence of D-xylose. The protein is D-xylose 1-dehydrogenase (NADP(+)) of Hypocrea jecorina (strain ATCC 56765 / BCRC 32924 / NRRL 11460 / Rut C-30) (Trichoderma reesei).